Here is a 287-residue protein sequence, read N- to C-terminus: Phosphatidylserine decarboxylase proenzyme (287 aa).

Catalysis depends on charge relay system; for autoendoproteolytic cleavage activity residues aspartate 89, histidine 146, and serine 252. Catalysis depends on serine 252, which acts as the Schiff-base intermediate with substrate; via pyruvic acid; for decarboxylase activity. The residue at position 252 (serine 252) is a Pyruvic acid (Ser); by autocatalysis.

The protein belongs to the phosphatidylserine decarboxylase family. PSD-B subfamily. Prokaryotic type I sub-subfamily. As to quaternary structure, heterodimer of a large membrane-associated beta subunit and a small pyruvoyl-containing alpha subunit. Pyruvate serves as cofactor. In terms of processing, is synthesized initially as an inactive proenzyme. Formation of the active enzyme involves a self-maturation process in which the active site pyruvoyl group is generated from an internal serine residue via an autocatalytic post-translational modification. Two non-identical subunits are generated from the proenzyme in this reaction, and the pyruvate is formed at the N-terminus of the alpha chain, which is derived from the carboxyl end of the proenzyme. The autoendoproteolytic cleavage occurs by a canonical serine protease mechanism, in which the side chain hydroxyl group of the serine supplies its oxygen atom to form the C-terminus of the beta chain, while the remainder of the serine residue undergoes an oxidative deamination to produce ammonia and the pyruvoyl prosthetic group on the alpha chain. During this reaction, the Ser that is part of the protease active site of the proenzyme becomes the pyruvoyl prosthetic group, which constitutes an essential element of the active site of the mature decarboxylase.

The protein resides in the cell membrane. It catalyses the reaction a 1,2-diacyl-sn-glycero-3-phospho-L-serine + H(+) = a 1,2-diacyl-sn-glycero-3-phosphoethanolamine + CO2. It functions in the pathway phospholipid metabolism; phosphatidylethanolamine biosynthesis; phosphatidylethanolamine from CDP-diacylglycerol: step 2/2. Catalyzes the formation of phosphatidylethanolamine (PtdEtn) from phosphatidylserine (PtdSer). This is Phosphatidylserine decarboxylase proenzyme from Shewanella halifaxensis (strain HAW-EB4).